We begin with the raw amino-acid sequence, 453 residues long: AP-4 complex subunit mu-1 (453 aa).

The MHD domain occupies 184–452 (KNEVFLDVVE…LSHSDAYVIR (269 aa)).

The protein belongs to the adaptor complexes medium subunit family. As to quaternary structure, adaptor protein complex 4 (AP-4) is a heterotetramer composed of two large adaptins (epsilon-type subunit AP4E1 and beta-type subunit AP4B1), a medium adaptin (mu-type subunit AP4M1) and a small adaptin (sigma-type AP4S1). Interacts with tyrosine-based sorting signals on the cytoplasmic tail of cargo proteins such as APP, ATG9A, LAMP2 and NAGPA. Interacts with the C-terminal domain of GRID2. Interacts with GRIA1 and GRIA2; the interaction is indirect via CACNG3. Interacts with CACNG3; CACNG3 associates GRIA1 and GRIA2 with the adaptor protein complex 4 (AP-4) to target them to the somatodendritic compartment of neurons. Interacts with HOOK1 and HOOK2; the interactions are direct, mediate the interaction between FTS-Hook-FHIP (FHF) complex and AP-4 and the perinuclear distribution of AP-4. In terms of tissue distribution, ubiquitous. Highly expressed in testis and lowly expressed in brain and lung.

The protein localises to the golgi apparatus. It localises to the trans-Golgi network membrane. Its subcellular location is the early endosome. Component of the adaptor protein complex 4 (AP-4). Adaptor protein complexes are vesicle coat components involved both in vesicle formation and cargo selection. They control the vesicular transport of proteins in different trafficking pathways. AP-4 forms a non clathrin-associated coat on vesicles departing the trans-Golgi network (TGN) and may be involved in the targeting of proteins from the trans-Golgi network (TGN) to the endosomal-lysosomal system. It is also involved in protein sorting to the basolateral membrane in epithelial cells and the proper asymmetric localization of somatodendritic proteins in neurons. Within AP-4, the mu-type subunit AP4M1 is directly involved in the recognition and binding of tyrosine-based sorting signals found in the cytoplasmic part of cargos. The adaptor protein complex 4 (AP-4) may also recognize other types of sorting signal. The polypeptide is AP-4 complex subunit mu-1 (Homo sapiens (Human)).